Here is a 220-residue protein sequence, read N- to C-terminus: Iron-sulfur cluster repair protein YtfE (220 aa).

This sequence belongs to the RIC family. YtfE subfamily. As to quaternary structure, homodimer.

The protein resides in the cytoplasm. Its function is as follows. Di-iron-containing protein involved in the repair of iron-sulfur clusters damaged by oxidative and nitrosative stress conditions. The sequence is that of Iron-sulfur cluster repair protein YtfE from Salmonella paratyphi A (strain AKU_12601).